Reading from the N-terminus, the 208-residue chain is Uracil phosphoribosyltransferase (208 aa).

Residues Arg-78, Arg-103, and 130-138 (DPMLATGGS) contribute to the 5-phospho-alpha-D-ribose 1-diphosphate site. Uracil contacts are provided by residues Ile-193 and 198–200 (GDA). Position 199 (Asp-199) interacts with 5-phospho-alpha-D-ribose 1-diphosphate.

The protein belongs to the UPRTase family. It depends on Mg(2+) as a cofactor.

It catalyses the reaction UMP + diphosphate = 5-phospho-alpha-D-ribose 1-diphosphate + uracil. It functions in the pathway pyrimidine metabolism; UMP biosynthesis via salvage pathway; UMP from uracil: step 1/1. Its activity is regulated as follows. Allosterically activated by GTP. Catalyzes the conversion of uracil and 5-phospho-alpha-D-ribose 1-diphosphate (PRPP) to UMP and diphosphate. The protein is Uracil phosphoribosyltransferase of Thermus thermophilus (strain ATCC 27634 / DSM 579 / HB8).